A 630-amino-acid chain; its full sequence is GTPase-activating protein NEL1 (630 aa).

This sequence belongs to the SEC23/SEC24 family. SEC23 subfamily.

It is found in the cytoplasm. Its subcellular location is the nucleus. Its function is as follows. Acts as a GTPase-activating protein (GAP) for SAR1. Contrary to its SEC23 homolog, NEL1 does not associate with SEC24 and its homologs, nor does it associate with the COPII components, suggesting that it is unlikely that NEL1 functions as a structural component of the vesicle coat machinery. May function as a signaling molecule. In Saccharomyces cerevisiae (strain ATCC 204508 / S288c) (Baker's yeast), this protein is GTPase-activating protein NEL1.